The chain runs to 257 residues: Dihydroorotate dehydrogenase B (NAD(+)), electron transfer subunit (257 aa).

The 100-residue stretch at 2–101 (IRQEKMRVVS…LGPIGNGFPV (100 aa)) folds into the FAD-binding FR-type domain. Residues 52-55 (RPIS), 69-71 (IYR), and 76-77 (GT) each bind FAD. Residues Cys-220, Cys-225, Cys-228, and Cys-244 each contribute to the [2Fe-2S] cluster site.

It belongs to the PyrK family. Heterotetramer of 2 PyrK and 2 PyrD type B subunits. The cofactor is [2Fe-2S] cluster. Requires FAD as cofactor.

Its pathway is pyrimidine metabolism; UMP biosynthesis via de novo pathway; orotate from (S)-dihydroorotate (NAD(+) route): step 1/1. Functionally, responsible for channeling the electrons from the oxidation of dihydroorotate from the FMN redox center in the PyrD type B subunit to the ultimate electron acceptor NAD(+). The chain is Dihydroorotate dehydrogenase B (NAD(+)), electron transfer subunit from Lysinibacillus sphaericus (strain C3-41).